A 423-amino-acid polypeptide reads, in one-letter code: UPF0229 protein PSEEN0423 (423 aa).

A disordered region spans residues 85 to 107; the sequence is GEHIARPQGGGGGGGRGKAGNSG. A compositionally biased stretch (gly residues) spans 92–107; it reads QGGGGGGGRGKAGNSG.

This sequence belongs to the UPF0229 family.

The sequence is that of UPF0229 protein PSEEN0423 from Pseudomonas entomophila (strain L48).